The chain runs to 396 residues: Phosphoglycerate kinase (396 aa).

Residues 21 to 23 (DFN), arginine 36, 59 to 62 (HLGK), arginine 119, and arginine 156 each bind substrate. Residues lysine 206, glutamate 325, and 352–355 (GGDS) contribute to the ATP site.

Belongs to the phosphoglycerate kinase family. In terms of assembly, monomer.

The protein resides in the cytoplasm. The catalysed reaction is (2R)-3-phosphoglycerate + ATP = (2R)-3-phospho-glyceroyl phosphate + ADP. Its pathway is carbohydrate degradation; glycolysis; pyruvate from D-glyceraldehyde 3-phosphate: step 2/5. This Staphylococcus epidermidis (strain ATCC 35984 / DSM 28319 / BCRC 17069 / CCUG 31568 / BM 3577 / RP62A) protein is Phosphoglycerate kinase.